The primary structure comprises 464 residues: Molybdate transporter 2 (464 aa).

The Tonoplast targeting signal signature appears at 8–9 (LL). The next 9 helical transmembrane spans lie at 33–53 (LSGA…LTLV), 62–82 (LIFT…PMPV), 116–136 (LLLG…LPVV), 172–192 (IWLG…IILS), 223–243 (LLSS…LCFI), 309–329 (VSIS…MPVC), 348–368 (SVIF…NSFV), 374–394 (FPIG…AMAS), and 404–424 (FIML…LGFG).

The protein belongs to the SLC26A/SulP transporter (TC 2.A.53) family. In terms of tissue distribution, expressed in leaves. Not detected in roots, shoots and seeds.

It localises to the vacuole membrane. Molybdate transporter required for vacuolar molybdate export during senescence. This chain is Molybdate transporter 2 (MOT2), found in Arabidopsis thaliana (Mouse-ear cress).